The primary structure comprises 424 residues: UDP-N-acetylglucosamine 1-carboxyvinyltransferase (424 aa).

22-23 serves as a coordination point for phosphoenolpyruvate; the sequence is KN. R98 lines the UDP-N-acetyl-alpha-D-glucosamine pocket. C122 acts as the Proton donor in catalysis. C122 carries the post-translational modification 2-(S-cysteinyl)pyruvic acid O-phosphothioketal. UDP-N-acetyl-alpha-D-glucosamine-binding positions include 127-131, D312, and I334; that span reads RPVDQ.

Belongs to the EPSP synthase family. MurA subfamily.

It localises to the cytoplasm. The enzyme catalyses phosphoenolpyruvate + UDP-N-acetyl-alpha-D-glucosamine = UDP-N-acetyl-3-O-(1-carboxyvinyl)-alpha-D-glucosamine + phosphate. It functions in the pathway cell wall biogenesis; peptidoglycan biosynthesis. In terms of biological role, cell wall formation. Adds enolpyruvyl to UDP-N-acetylglucosamine. The protein is UDP-N-acetylglucosamine 1-carboxyvinyltransferase of Xanthomonas oryzae pv. oryzae (strain MAFF 311018).